The sequence spans 173 residues: Atrial gland and califin peptides (173 aa).

Positions 1–21 (MKANTMFIILCLSLSTLCVSS) are cleaved as a signal peptide. The propeptide occupies 22–34 (QSTSVHGKIFVPN). Ile-69 is subject to Isoleucine amide. Positions 73-114 (AAGEMEQSEGQNPETKSHSWRKRSVLTPSLSSLGESLESGIS) are excised as a propeptide. Positions 75 to 94 (GEMEQSEGQNPETKSHSWRK) are disordered. Residues Cys-141 and Cys-172 are joined by a disulfide bond. At Leu-152 the chain carries Leucine amide.

The protein belongs to the molluscan ELH family. Califin A consists of a 36-residue large subunit bound by a single disulfide bond to a 18-residue small subunit.

Its subcellular location is the secreted. In terms of biological role, the atrial gland peptide A and peptide B precursors are the source of the 2 peptides that, upon release from this reproductive system gland, initiate the egg-laying process by exciting the bag cell neurons. These neurons, clustered in neural connectives near the abdominal ganglion, in turn release other peptides that act directly on the ganglion and also, via the circulating hemolymph, on many other organs to control the physiological processes of egg-laying. One of these other peptides is the egg-laying hormone. Its function is as follows. Injected in sexually mature animals califin A excites LB and LC cells of the abdominal ganglion and causes egg-laying. This chain is Atrial gland and califin peptides, found in Aplysia californica (California sea hare).